The following is a 341-amino-acid chain: MKDNYILAFETSCDETSVAILKNGSELLCNIIASQINSHKRFGGVVPEIASRHHVEQITVCIEAALEEAEISADQLTAVAVTEGPGLNGALLVGIMAAKTFAWANHLPLIPVNHMAGHLMAASLVDTIEYPAMALLVSGGHSELVYVEKEGSYKKVGETRDDAAGEAYDKVGRVMGLTYPSGKVIDELAHKGQDTYNFPRAMMNTHEVEFSFSGLKSAFINLVHNENQKGNDVIANDLENLAASFQAAVVDVLMAKTKLAMEKYPVKTLIIGGGVSANQGLRERLSAEITDEKLIIPPLRLCGDNAGMIAAAAYIEWKKGLENVQAGLDLNAKPSLVFEDM.

Fe cation is bound by residues His114 and His118. Substrate is bound by residues 136–140, Asp169, Gly182, Asp186, and Asn278; that span reads LVSGG. Asp304 is a Fe cation binding site.

The protein belongs to the KAE1 / TsaD family. Fe(2+) is required as a cofactor.

The protein localises to the cytoplasm. The enzyme catalyses L-threonylcarbamoyladenylate + adenosine(37) in tRNA = N(6)-L-threonylcarbamoyladenosine(37) in tRNA + AMP + H(+). Functionally, required for the formation of a threonylcarbamoyl group on adenosine at position 37 (t(6)A37) in tRNAs that read codons beginning with adenine. Is involved in the transfer of the threonylcarbamoyl moiety of threonylcarbamoyl-AMP (TC-AMP) to the N6 group of A37, together with TsaE and TsaB. TsaD likely plays a direct catalytic role in this reaction. The polypeptide is tRNA N6-adenosine threonylcarbamoyltransferase (Lactococcus lactis subsp. cremoris (strain SK11)).